A 294-amino-acid chain; its full sequence is uncharacterized protein (294 aa).

Disordered stretches follow at residues 1 to 148 (MFLR…LEKP) and 268 to 294 (DEAA…GKGL). A phosphoserine mark is found at Ser-34 and Ser-35. The span at 35–44 (SSENSGSDWD) shows a compositional bias: low complexity. A compositionally biased stretch (basic and acidic residues) spans 52–62 (DVGHPKTKDSG). Ser-71 and Ser-90 each carry phosphoserine. 2 stretches are compositionally biased toward basic and acidic residues: residues 73–92 (PSKE…DSLK) and 278–294 (GLER…GKGL).

This is an uncharacterized protein from Homo sapiens (Human).